Consider the following 190-residue polypeptide: Holliday junction branch migration complex subunit RuvA (190 aa).

The segment at 1–64 (MIGSLTGIIE…DNLTQLYGFL (64 aa)) is domain I. The domain II stretch occupies residues 65–142 (DKQEQDYMRM…KMPIEETLII (78 aa)). A region of interest (flexible linker) is located at residue Lys143. Positions 143 to 190 (KEDDSLAALISLGYDKLKAFNAIQEIKSDFPNANIQEIIRKALQKLSQ) are domain III.

It belongs to the RuvA family. As to quaternary structure, homotetramer. Forms an RuvA(8)-RuvB(12)-Holliday junction (HJ) complex. HJ DNA is sandwiched between 2 RuvA tetramers; dsDNA enters through RuvA and exits via RuvB. An RuvB hexamer assembles on each DNA strand where it exits the tetramer. Each RuvB hexamer is contacted by two RuvA subunits (via domain III) on 2 adjacent RuvB subunits; this complex drives branch migration. In the full resolvosome a probable DNA-RuvA(4)-RuvB(12)-RuvC(2) complex forms which resolves the HJ.

It is found in the cytoplasm. Functionally, the RuvA-RuvB-RuvC complex processes Holliday junction (HJ) DNA during genetic recombination and DNA repair, while the RuvA-RuvB complex plays an important role in the rescue of blocked DNA replication forks via replication fork reversal (RFR). RuvA specifically binds to HJ cruciform DNA, conferring on it an open structure. The RuvB hexamer acts as an ATP-dependent pump, pulling dsDNA into and through the RuvAB complex. HJ branch migration allows RuvC to scan DNA until it finds its consensus sequence, where it cleaves and resolves the cruciform DNA. This is Holliday junction branch migration complex subunit RuvA from Ehrlichia canis (strain Jake).